Here is a 507-residue protein sequence, read N- to C-terminus: ATP synthase subunit alpha, chloroplastic (507 aa).

An ATP-binding site is contributed by 170-177 (GDRQTGKT).

This sequence belongs to the ATPase alpha/beta chains family. In terms of assembly, F-type ATPases have 2 components, CF(1) - the catalytic core - and CF(0) - the membrane proton channel. CF(1) has five subunits: alpha(3), beta(3), gamma(1), delta(1), epsilon(1). CF(0) has four main subunits: a, b, b' and c.

The protein resides in the plastid. The protein localises to the chloroplast thylakoid membrane. It carries out the reaction ATP + H2O + 4 H(+)(in) = ADP + phosphate + 5 H(+)(out). In terms of biological role, produces ATP from ADP in the presence of a proton gradient across the membrane. The alpha chain is a regulatory subunit. The chain is ATP synthase subunit alpha, chloroplastic from Nymphaea alba (White water-lily).